A 123-amino-acid chain; its full sequence is uncharacterized protein (123 aa).

This is an uncharacterized protein from Acanthamoeba polyphaga mimivirus (APMV).